Reading from the N-terminus, the 874-residue chain is MEVLREKVEEEEEAEREEAAEWAEWARMEKMMRPVEVRKEEITLKQETLRDLEKKLSEIQITVSAELPAFTKDTIDISKLPISYKTNTPKEEHLLQVADNFSRQYSHLCPDRVPLFLHPLNECEVPKFVSTTLRPTLMPYPELYNWDSCAQFVSDFLTMVPLPDPLKPPSHLYSSTTVLKYQKGNCFDFSTLLCSMLIGSGYDAYCVNGYGSLDLCHMDLTREVCPLTVKPKETIKKEEKVLPKKYTIKPPRDLCSRFEQEQEVKKQQEIRAQEKKRLREEEERLMEAEKAKPDALHGLRVHSWVLVLSGKREVPENFFIDPFTGHSYSTQDEHFLGIESLWNHKNYWINMQDCWNCCKDLIFDLGDPVRWEYMLLGTDKSQLSLTEEDDSGINDEDDVENLGKEDEDKSFDMPHSWVEQIEISPEAFETRCPNGKKVIQYKRAKLEKWAPYLNSNGLVSRLTTYEDLQCTNILEIKEWYQNREDMLELKHINKTTDLKTDYFKPGHPQALRVHSYKSMQPEMDRVIEFYETARVDGLMKREETPRTMTEYYQGRPDFLSYRHASFGPRVKKLTLSSAESNPRPIVKITERFFRNPAKPAEEDVAERVFLVAEERIQLRYHCREDHITASKREFLRRTEVDSKGNKIIMTPDMCISFEVEPMEHTKKLLYQYEAMMHLKREEKLSRHQVWESELEVLEILKLREEEEAAHTLTISIYDTKRNEKSKEYREAMERMMHEEHLRQVETQLDYLAPFLAQLPPGEKLTCWQAVRLKDECLSDFKQRLINKANLIQARFEKETQELQKKQQWYQENQVTLTPEDEDLYLSYCSQAMFRIRILEQRLNRHKELAPLKYLALEEKLYKDPRLGELQKIFA.

2 coiled-coil regions span residues 1–67 (MEVL…SAEL) and 257–297 (RFEQ…DALH). Residues 386-400 (TEEDDSGINDEDDVE) are compositionally biased toward acidic residues. Residues 386 to 410 (TEEDDSGINDEDDVENLGKEDEDKS) form a disordered region. Residues 401–410 (NLGKEDEDKS) are compositionally biased toward basic and acidic residues. Coiled coils occupy residues 688–711 (QVWESELEVLEILKLREEEEAAHT) and 781–807 (KQRLINKANLIQARFEKETQELQKKQQ).

It belongs to the DRC7 family. Component of the nexin-dynein regulatory complex (N-DRC). Interacts with TCTE1/DRC5. Interacts with DRC3 and GAS8/DRC4.

It is found in the cell projection. The protein resides in the cilium. The protein localises to the flagellum. It localises to the cytoplasm. Its subcellular location is the cytoskeleton. It is found in the cilium axoneme. The protein resides in the flagellum axoneme. Functionally, component of the nexin-dynein regulatory complex (N-DRC) a key regulator of ciliary/flagellar motility which maintains the alignment and integrity of the distal axoneme and regulates microtubule sliding in motile axonemes. Involved in the regulation of flagellar motility. Essential for male fertility, sperm head morphogenesis and sperm flagellum formation. In Homo sapiens (Human), this protein is Dynein regulatory complex subunit 7 (DRC7).